The following is a 209-amino-acid chain: Nucleoside triphosphate pyrophosphatase (209 aa).

D79 (proton acceptor) is an active-site residue.

Belongs to the Maf family. It depends on a divalent metal cation as a cofactor.

The protein resides in the cytoplasm. The catalysed reaction is a ribonucleoside 5'-triphosphate + H2O = a ribonucleoside 5'-phosphate + diphosphate + H(+). It catalyses the reaction a 2'-deoxyribonucleoside 5'-triphosphate + H2O = a 2'-deoxyribonucleoside 5'-phosphate + diphosphate + H(+). Its function is as follows. Nucleoside triphosphate pyrophosphatase. May have a dual role in cell division arrest and in preventing the incorporation of modified nucleotides into cellular nucleic acids. In Mycolicibacterium gilvum (strain PYR-GCK) (Mycobacterium gilvum (strain PYR-GCK)), this protein is Nucleoside triphosphate pyrophosphatase.